A 141-amino-acid chain; its full sequence is High mobility group B protein 3 (141 aa).

2 stretches are compositionally biased toward basic and acidic residues: residues 1–12 (MKGAKSKAETRS) and 70–110 (GGEK…LEEG). Disordered stretches follow at residues 1–40 (MKGA…RPSS) and 54–141 (KEEH…EDDD). The segment at residues 35–104 (PKRPSSAFFV…EYEKNMKAYN (70 aa)) is a DNA-binding region (HMG box). The residue at position 122 (S122) is a Phosphoserine. The segment covering 124–141 (VNDEDDAEDGSEEEEDDD) has biased composition (acidic residues).

Belongs to the HMGB family. As to expression, expressed in lateral roots, root tips, stems, cotyledons, leaves and flowers (excluding ovary and pedicels).

The protein localises to the nucleus. Its subcellular location is the cytoplasm. It localises to the cytosol. In terms of biological role, binds preferentially double-stranded DNA. The chain is High mobility group B protein 3 (HMGB3) from Arabidopsis thaliana (Mouse-ear cress).